The primary structure comprises 296 residues: Chelated iron transport system membrane protein YfeB (296 aa).

The region spanning leucine 11–leucine 246 is the ABC transporter domain. Position 44–51 (glycine 44–serine 51) interacts with ATP. A disordered region spans residues valine 276 to serine 296. Residues proline 286–serine 296 are compositionally biased toward polar residues.

Belongs to the ABC transporter superfamily.

The protein localises to the cell inner membrane. Part of an ATP-driven transport system YfeABCD for chelated iron. This is Chelated iron transport system membrane protein YfeB (yfeB) from Yersinia pestis.